Reading from the N-terminus, the 131-residue chain is Small ribosomal subunit protein bS6 (131 aa).

A disordered region spans residues 96 to 131 (VTEASPMAKAKDERDSRRGPAGDRSYDEANAEEIAE). Positions 104–122 (KAKDERDSRRGPAGDRSYD) are enriched in basic and acidic residues.

This sequence belongs to the bacterial ribosomal protein bS6 family.

In terms of biological role, binds together with bS18 to 16S ribosomal RNA. This Shewanella sp. (strain ANA-3) protein is Small ribosomal subunit protein bS6.